A 305-amino-acid chain; its full sequence is Putative lipid kinase SAS0691 (305 aa).

Residues 3–139 form the DAGKc domain; sequence NKYTHGVLFY…YDVIKINNQY (137 aa). Residues Ser44, 74-80, and Thr101 each bind ATP; that span reads GDGTVNE. Positions 220, 223, and 225 each coordinate Mg(2+). The active-site Proton acceptor is the Glu281.

The protein belongs to the diacylglycerol/lipid kinase family. Mg(2+) serves as cofactor.

Its function is as follows. May catalyze the ATP-dependent phosphorylation of lipids other than diacylglycerol (DAG). The polypeptide is Putative lipid kinase SAS0691 (Staphylococcus aureus (strain MSSA476)).